Consider the following 99-residue polypeptide: Aspartyl/glutamyl-tRNA(Asn/Gln) amidotransferase subunit C (99 aa).

Belongs to the GatC family. As to quaternary structure, heterotrimer of A, B and C subunits.

It carries out the reaction L-glutamyl-tRNA(Gln) + L-glutamine + ATP + H2O = L-glutaminyl-tRNA(Gln) + L-glutamate + ADP + phosphate + H(+). It catalyses the reaction L-aspartyl-tRNA(Asn) + L-glutamine + ATP + H2O = L-asparaginyl-tRNA(Asn) + L-glutamate + ADP + phosphate + 2 H(+). Allows the formation of correctly charged Asn-tRNA(Asn) or Gln-tRNA(Gln) through the transamidation of misacylated Asp-tRNA(Asn) or Glu-tRNA(Gln) in organisms which lack either or both of asparaginyl-tRNA or glutaminyl-tRNA synthetases. The reaction takes place in the presence of glutamine and ATP through an activated phospho-Asp-tRNA(Asn) or phospho-Glu-tRNA(Gln). This Corynebacterium diphtheriae (strain ATCC 700971 / NCTC 13129 / Biotype gravis) protein is Aspartyl/glutamyl-tRNA(Asn/Gln) amidotransferase subunit C.